Here is a 558-residue protein sequence, read N- to C-terminus: NXPE family member 2 (558 aa).

The chain crosses the membrane as a helical span at residues 17 to 37 (ASARKLFLIVLIIFVFWVVFM).

This sequence belongs to the NXPE family.

It localises to the membrane. This is NXPE family member 2 (Nxpe2) from Mus musculus (Mouse).